The sequence spans 433 residues: Xylose isomerase (433 aa).

Catalysis depends on residues His-99 and Asp-102. Glu-230, Glu-266, His-269, Asp-294, Asp-305, Asp-307, and Asp-337 together coordinate Mg(2+).

This sequence belongs to the xylose isomerase family. As to quaternary structure, homotetramer. Requires Mg(2+) as cofactor.

The protein resides in the cytoplasm. It catalyses the reaction alpha-D-xylose = alpha-D-xylulofuranose. This Cereibacter sphaeroides (strain ATCC 17023 / DSM 158 / JCM 6121 / CCUG 31486 / LMG 2827 / NBRC 12203 / NCIMB 8253 / ATH 2.4.1.) (Rhodobacter sphaeroides) protein is Xylose isomerase.